The primary structure comprises 381 residues: 40-kDa huntingtin-associated protein (381 aa).

Alanine 2 bears the N-acetylalanine mark. The Nuclear localization signal motif lies at 34–36; the sequence is KKR. The disordered stretch occupies residues 221-265; that stretch reads QLELLPQPPSGPQPPLSGPQPRPVLGSTLPLPQPPDHAPGSVAPS. Pro residues predominate over residues 226–242; the sequence is PQPPSGPQPPLSGPQPR.

As to quaternary structure, interacts with HTT (via C-terminus). Interacts with RAB5A. Found in a complex with F8A1/F8A2/F8A3, HTT and RAB5A; mediates the recruitment of HTT by RAB5A onto early endosomes. In terms of tissue distribution, produced abundantly in a wide variety of cell types.

It is found in the cytoplasm. Its subcellular location is the nucleus. The protein localises to the early endosome. It localises to the nuclear body. In terms of biological role, RAB5A effector molecule that is involved in vesicular trafficking of early endosomes. Mediates the recruitment of HTT by RAB5A onto early endosomes. The HTT-F8A1/F8A2/F8A3-RAB5A complex stimulates early endosomal interaction with actin filaments and inhibits interaction with microtubules, leading to the reduction of endosome motility. This Mus musculus (Mouse) protein is 40-kDa huntingtin-associated protein (F8a1).